The primary structure comprises 72 residues: Protein SlyX (72 aa).

This sequence belongs to the SlyX family.

This is Protein SlyX from Cronobacter sakazakii (strain ATCC BAA-894) (Enterobacter sakazakii).